Here is a 528-residue protein sequence, read N- to C-terminus: Putative galacturonosyltransferase 2 (528 aa).

The protein belongs to the glycosyltransferase 8 family.

Its pathway is glycan metabolism; pectin biosynthesis. Functionally, may be involved in pectin and/or xylans biosynthesis in cell walls. The sequence is that of Putative galacturonosyltransferase 2 (GAUT2) from Arabidopsis thaliana (Mouse-ear cress).